The sequence spans 1195 residues: Zinc finger and BTB domain-containing protein 38 (1195 aa).

In terms of domain architecture, BTB spans Cys-33–Arg-100. Lys-43 participates in a covalent cross-link: Glycyl lysine isopeptide (Lys-Gly) (interchain with G-Cter in SUMO2). Ser-130 is modified (phosphoserine). Residues Lys-145, Lys-148, Lys-151, and Lys-259 each participate in a glycyl lysine isopeptide (Lys-Gly) (interchain with G-Cter in SUMO2) cross-link. The disordered stretch occupies residues Arg-264–Ala-334. The segment covering Ser-270 to Glu-280 has biased composition (polar residues). The interval Pro-300–Glu-523 is interaction with CBFA2T3. At Ser-309 the chain carries Phosphoserine. The span at Gly-314 to Glu-323 shows a compositional bias: basic and acidic residues. Residues Tyr-342 to His-364 form a C2H2-type 1 zinc finger. The C2H2-type 2; degenerate zinc-finger motif lies at Leu-371 to Arg-395. C2H2-type zinc fingers lie at residues Tyr-460–His-482, Tyr-488–His-510, and Tyr-516–His-539. Glycyl lysine isopeptide (Lys-Gly) (interchain with G-Cter in SUMO2) cross-links involve residues Lys-550, Lys-557, Lys-754, Lys-758, Lys-763, Lys-804, Lys-814, Lys-821, Lys-842, Lys-850, and Lys-857. The segment at Ser-745 to Lys-804 is disordered. Positions Leu-753–Gly-765 are enriched in basic and acidic residues. 2 disordered regions span residues Gln-871 to Leu-891 and Phe-903 to Tyr-922. Glycyl lysine isopeptide (Lys-Gly) (interchain with G-Cter in SUMO2) cross-links involve residues Lys-923, Lys-964, Lys-969, Lys-977, Lys-981, Lys-991, Lys-1017, and Lys-1026. C2H2-type zinc fingers lie at residues Tyr-1010–His-1032, Tyr-1038–His-1060, Phe-1066–His-1088, Tyr-1094–His-1116, and Tyr-1125–His-1147. Residues Lys-1109, Lys-1132, Lys-1135, Lys-1150, and Lys-1183 each participate in a glycyl lysine isopeptide (Lys-Gly) (interchain with G-Cter in SUMO2) cross-link.

As to quaternary structure, interacts with CBFA2T3. Interacts with ZBTB4. Interacts with RBBP6. Post-translationally, ubiquitinated by RBBP6; leading to its degradation by the proteasome.

The protein resides in the nucleus. It localises to the chromosome. Transcriptional regulator with bimodal DNA-binding specificity. Binds with a higher affinity to methylated CpG dinucleotides in the consensus sequence 5'-CGCG-3' but can also bind to E-box elements (5'-CACGTG-3'). Can also bind specifically to a single methyl-CpG pair. Represses transcription in a methyl-CpG-dependent manner. Plays an important role in regulating DNA replication and common fragile sites (CFS) stability in a RBBP6- and MCM10-dependent manner; represses expression of MCM10 which plays an important role in DNA-replication. Acts as a transcriptional activator. May be involved in the differentiation and/or survival of late postmitotic neurons. The polypeptide is Zinc finger and BTB domain-containing protein 38 (Homo sapiens (Human)).